The sequence spans 448 residues: Adenylosuccinate synthetase (448 aa).

GTP-binding positions include 22-28 (GDEGKGK) and 50-52 (GHT). Residue D23 is the Proton acceptor of the active site. Mg(2+)-binding residues include D23 and G50. IMP contacts are provided by residues 23–26 (DEGK), 48–51 (NAGH), T139, R153, Q234, T249, and R321. The active-site Proton donor is the H51. 317 to 323 (SVTGRPR) serves as a coordination point for substrate. GTP is bound by residues R323, 349–351 (KLD), and 431–433 (STG).

Belongs to the adenylosuccinate synthetase family. In terms of assembly, homodimer. Requires Mg(2+) as cofactor.

Its subcellular location is the cytoplasm. It catalyses the reaction IMP + L-aspartate + GTP = N(6)-(1,2-dicarboxyethyl)-AMP + GDP + phosphate + 2 H(+). It functions in the pathway purine metabolism; AMP biosynthesis via de novo pathway; AMP from IMP: step 1/2. Plays an important role in the de novo pathway of purine nucleotide biosynthesis. Catalyzes the first committed step in the biosynthesis of AMP from IMP. The sequence is that of Adenylosuccinate synthetase from Burkholderia pseudomallei (strain 1106a).